Reading from the N-terminus, the 68-residue chain is Large ribosomal subunit protein bL35 (68 aa).

Belongs to the bacterial ribosomal protein bL35 family.

The polypeptide is Large ribosomal subunit protein bL35 (Fusobacterium nucleatum subsp. nucleatum (strain ATCC 25586 / DSM 15643 / BCRC 10681 / CIP 101130 / JCM 8532 / KCTC 2640 / LMG 13131 / VPI 4355)).